Consider the following 308-residue polypeptide: tRNA dimethylallyltransferase (308 aa).

ATP is bound at residue 14–21 (GPTASGKT). 16-21 (TASGKT) lines the substrate pocket. Interaction with substrate tRNA regions lie at residues 39–42 (DSAL), 163–167 (QRLSR), and 244–249 (RCVGYR).

It belongs to the IPP transferase family. In terms of assembly, monomer. Mg(2+) serves as cofactor.

The enzyme catalyses adenosine(37) in tRNA + dimethylallyl diphosphate = N(6)-dimethylallyladenosine(37) in tRNA + diphosphate. Functionally, catalyzes the transfer of a dimethylallyl group onto the adenine at position 37 in tRNAs that read codons beginning with uridine, leading to the formation of N6-(dimethylallyl)adenosine (i(6)A). The chain is tRNA dimethylallyltransferase from Shewanella loihica (strain ATCC BAA-1088 / PV-4).